A 144-amino-acid chain; its full sequence is Large ribosomal subunit protein uL11 (144 aa).

It belongs to the universal ribosomal protein uL11 family. Part of the ribosomal stalk of the 50S ribosomal subunit. Interacts with L10 and the large rRNA to form the base of the stalk. L10 forms an elongated spine to which L12 dimers bind in a sequential fashion forming a multimeric L10(L12)X complex. Post-translationally, one or more lysine residues are methylated.

In terms of biological role, forms part of the ribosomal stalk which helps the ribosome interact with GTP-bound translation factors. The protein is Large ribosomal subunit protein uL11 of Deinococcus geothermalis (strain DSM 11300 / CIP 105573 / AG-3a).